The chain runs to 706 residues: MSSAGVLTCIPDSGPIFRETSLRPPVPGQETNNFKPEKFTMDSQHLKHKEDFNREAEGCVAHDSRFSRWGRSLNLLLDDQDGATLFRMYLEGEGLGDLLTFWFACNGFRAMDPLEPKTSKTAKAIYRWYVQNSSAVSGRLKPTTRTQVKECVKNHQLNKTVFDQAQQEIQRAMEQEAFTSFLQSDICKEYARGVEDSPTPESPGPGLPTLTEDEEFGGLHHFSSGMGKINRAFSRIPPRNQRSHFRKLEQTYQYFAPAASINDSEISSDALTEDSMSMTDGSVDGIPPYRSKKQREIHRSVSANGKVSLPFVPRTMRPPAEMMPTSPAEFAAKLTIALEKVKKQRDAEEKLEEKLQRLKEEEEIADYDIPSSSHETVPGAALEDDPQSILDDHVSRVLKTPANLSPRSQSPFVQRKGKFQPAFSKGQTSTSCHLRPKVPQGMEATSTLASELRSSVSSQLPRSSRKPEGCTQPHRPEEGTSAAVLTTPLSPEQEAERNHSVLQWVLDSAKLMKKHHRETASVTPCPELKKATHRAASQPAHLFLQDTSMPPLTAPNTLDQLEEARRRLVEDKRVPKLHKSRCVQSTTLKEKGKTAESVPSSGFSTLKLSEEQKTAKKPSSECPGQGLAIVYYFCGERIPYMIRTKEPSLTLQEFKELLSKKGSNKYYFKKESHEFECNAVFQEVSEEDAVLPLFEEKIICKVERAC.

Positions S72–A191 constitute an RGS domain. 3 disordered regions span residues M278–H298, T400–A482, and S585–T605. Polar residues predominate over residues A402–F412. Residues R453 to R462 show a composition bias toward low complexity. Positions G624 to C706 constitute a DIX domain.

In terms of assembly, interacts with dvl2/dsh via DIX domains in both proteins. Forms a complex with ctnnb1/beta-catenin and gsk3b. Also forms heterodimers with mouse Axin1.

It is found in the cytoplasm. The protein resides in the cytoplasmic vesicle. Regulates the wnt signaling pathway by interacting with dvl2/dsh, which displaces gsk3b from the axnr-gsk3b complex and thus prevents degradation of ctnnb1/beta-catenin. The protein is Axin-related protein of Xenopus laevis (African clawed frog).